A 348-amino-acid chain; its full sequence is Rhodopsin (348 aa).

M1 carries the N-acetylmethionine modification. The Extracellular segment spans residues 1–36 (MNGTEGPNFYVPFSNKTGVVRSPFEAPQYYLAEPWQ). N2 and N15 each carry an N-linked (GlcNAc...) asparagine glycan. A helical transmembrane segment spans residues 37–61 (FSMLAAYMFLLIVLGFPINFLTLYV). Residues 62–73 (TVQHKKLRTPLN) are Cytoplasmic-facing. A helical membrane pass occupies residues 74-96 (YILLNLAVADLFMVFGGFTTTLY). At 97–110 (TSLHGYFVFGPTGC) the chain is on the extracellular side. C110 and C187 form a disulfide bridge. Residues 111–133 (NLEGFFATLGGEIALWSLVVLAI) form a helical membrane-spanning segment. The 'Ionic lock' involved in activated form stabilization motif lies at 134 to 136 (ERY). The Cytoplasmic portion of the chain corresponds to 134–152 (ERYVVVCKPMSNFRFGENH). Residues 153-173 (AIMGVAFTWVMALACAAPPLV) traverse the membrane as a helical segment. Residues 174–202 (GWSRYIPQGMQCSCGALYFTLKPEINNES) lie on the Extracellular side of the membrane. E201 provides a ligand contact to Zn(2+). Residues 203-224 (FVIYMFVVHFSIPLIVIFFCYG) traverse the membrane as a helical segment. At 225–252 (QLVFTVKEAAAQQQESATTQKAEKEVTR) the chain is on the cytoplasmic side. A helical transmembrane segment spans residues 253–274 (MVIIMVIAFLICWLPYAGVAFY). The Extracellular portion of the chain corresponds to 275–286 (IFTHQGSDFGPI). Q279 contacts Zn(2+). A helical transmembrane segment spans residues 287-308 (FMTIPAFFAKSSSVYNPVIYIM). K296 is subject to N6-(retinylidene)lysine. The Cytoplasmic portion of the chain corresponds to 309-348 (MNKQFRNCMLTTLCCGKNPLGDDEASTTVSKTETSQVAPA). Residues C322 and C323 are each lipidated (S-palmitoyl cysteine). The interaction with SAG stretch occupies residues 330–348 (DDEASTTVSKTETSQVAPA). At S334 the chain carries Phosphoserine. S334 is modified (phosphoserine; by RK and GRK7). Residues T335 and T336 each carry the phosphothreonine modification. Phosphothreonine; by RK and GRK7 is present on residues T335 and T336. S338 carries the post-translational modification Phosphoserine; by RK and GRK7. T340 and T342 each carry phosphothreonine. S343 is subject to Phosphoserine; by RK and GRK7.

Belongs to the G-protein coupled receptor 1 family. Opsin subfamily. Homodimer. May form a complex composed of RHO, GRK1 and RCVRN in a Ca(2+)-dependent manner; RCVRN prevents the interaction between GRK1 and RHO. Interacts with GRK1. Interacts (phosphorylated form) with SAG. Interacts with GNAT1. Interacts with GNAT3. SAG and G-proteins compete for a common binding site. Interacts with PRCD; the interaction promotes PRCD stability. Forms a complex with ASAP1 and ARF4. Forms a complex with ASAP1, RAB11A, Rabin8/RAB3IP, ARF4 and RAB11FIP3; the complex regulates Golgi-to-cilia rhodopsin/RHO transport in photoreceptors. Post-translationally, phosphorylated on some or all of the serine and threonine residues present in the C-terminal region. Contains one covalently linked retinal chromophore. Upon light absorption, the covalently bound 11-cis-retinal is converted to all-trans-retinal. After hydrolysis of the Schiff base and release of the covalently bound all-trans-retinal, active rhodopsin is regenerated by binding of a fresh molecule of 11-cis-retinal.

The protein localises to the membrane. It is found in the cell projection. It localises to the cilium. The protein resides in the photoreceptor outer segment. Photoreceptor required for image-forming vision at low light intensity. Required for photoreceptor cell viability after birth. Light-induced isomerization of 11-cis to all-trans retinal triggers a conformational change that activates signaling via G-proteins. Subsequent receptor phosphorylation mediates displacement of the bound G-protein alpha subunit by the arrestin SAG and terminates signaling. This chain is Rhodopsin (RHO), found in Ovis aries (Sheep).